Here is a 46-residue protein sequence, read N- to C-terminus: Diuretic hormone (46 aa).

I46 carries the post-translational modification Isoleucine amide.

This sequence belongs to the sauvagine/corticotropin-releasing factor/urotensin I family.

The protein resides in the secreted. Its function is as follows. Regulation of fluid secretion. Stimulates primary urine secretion by Malpighian tubules and causes a dose-dependent stimulation of cAMP levels in the tubules. This is Diuretic hormone from Acheta domesticus (House cricket).